A 487-amino-acid chain; its full sequence is Siroheme synthase (487 aa).

A precorrin-2 dehydrogenase /sirohydrochlorin ferrochelatase region spans residues 1–203 (MNTFPLFFKL…GRSVEAEQAL (203 aa)). NAD(+) contacts are provided by residues 22-23 (EV) and 43-44 (PQ). Phosphoserine is present on S128. The tract at residues 229-487 (GEVYIVGAGP…DQQAHALNML (259 aa)) is uroporphyrinogen-III C-methyltransferase. P238 contributes to the S-adenosyl-L-methionine binding site. D261 (proton acceptor) is an active-site residue. The active-site Proton donor is K283. S-adenosyl-L-methionine contacts are provided by residues 314–316 (GGD), V319, 344–345 (TA), M396, and A425.

This sequence in the N-terminal section; belongs to the precorrin-2 dehydrogenase / sirohydrochlorin ferrochelatase family. It in the C-terminal section; belongs to the precorrin methyltransferase family.

It catalyses the reaction uroporphyrinogen III + 2 S-adenosyl-L-methionine = precorrin-2 + 2 S-adenosyl-L-homocysteine + H(+). The enzyme catalyses precorrin-2 + NAD(+) = sirohydrochlorin + NADH + 2 H(+). The catalysed reaction is siroheme + 2 H(+) = sirohydrochlorin + Fe(2+). It functions in the pathway cofactor biosynthesis; adenosylcobalamin biosynthesis; precorrin-2 from uroporphyrinogen III: step 1/1. Its pathway is cofactor biosynthesis; adenosylcobalamin biosynthesis; sirohydrochlorin from precorrin-2: step 1/1. It participates in porphyrin-containing compound metabolism; siroheme biosynthesis; precorrin-2 from uroporphyrinogen III: step 1/1. The protein operates within porphyrin-containing compound metabolism; siroheme biosynthesis; siroheme from sirohydrochlorin: step 1/1. It functions in the pathway porphyrin-containing compound metabolism; siroheme biosynthesis; sirohydrochlorin from precorrin-2: step 1/1. Functionally, multifunctional enzyme that catalyzes the SAM-dependent methylations of uroporphyrinogen III at position C-2 and C-7 to form precorrin-2 via precorrin-1. Then it catalyzes the NAD-dependent ring dehydrogenation of precorrin-2 to yield sirohydrochlorin. Finally, it catalyzes the ferrochelation of sirohydrochlorin to yield siroheme. The sequence is that of Siroheme synthase from Psychrobacter sp. (strain PRwf-1).